The primary structure comprises 711 residues: MND1-interacting protein 1 (711 aa).

The stretch at 390–648 (EWAQKNAMQA…LEGSYDNEAN (259 aa)) forms a coiled coil. 2 disordered regions span residues 552 to 571 (EALAQMEEEQRSKEAAEGHN) and 602 to 622 (RLKASSDSDSSHISNNAWKPK). Positions 602–611 (RLKASSDSDS) are enriched in basic and acidic residues. The RING-type zinc-finger motif lies at 653 to 697 (CIICMKDEVSVVFLPCAHQVVCGSCSDSFFASNNGGSKVTCPCCR).

As to quaternary structure, interacts (via C-terminal domain) with MND1 and HOP2. Interacts with XRI1 (via C-terminal domain).

The sequence is that of MND1-interacting protein 1 (MIP1) from Arabidopsis thaliana (Mouse-ear cress).